We begin with the raw amino-acid sequence, 512 residues long: Cytochrome P450 1A1 (512 aa).

Residues 29 to 40 (SRPRVPKGLKNP) form a mitochondrial targeting signal region. Ser-67 carries O-linked (GlcNAc) serine glycosylation. Residue Phe-224 coordinates substrate. Residue Cys-457 participates in heme binding.

The protein belongs to the cytochrome P450 family. As to quaternary structure, interacts with cytosolic chaperones HSP70 and HSP90; this interaction is required for initial targeting to mitochondria. Interacts (via mitochondrial targeting signal) with TOMM40 (via N-terminus); this interaction is required for translocation across the mitochondrial outer membrane. Heme serves as cofactor.

Its subcellular location is the endoplasmic reticulum membrane. It localises to the mitochondrion inner membrane. It is found in the microsome membrane. The protein localises to the cytoplasm. The enzyme catalyses an organic molecule + reduced [NADPH--hemoprotein reductase] + O2 = an alcohol + oxidized [NADPH--hemoprotein reductase] + H2O + H(+). The catalysed reaction is estrone + reduced [NADPH--hemoprotein reductase] + O2 = 2-hydroxyestrone + oxidized [NADPH--hemoprotein reductase] + H2O + H(+). It carries out the reaction estrone + reduced [NADPH--hemoprotein reductase] + O2 = 4-hydroxyestrone + oxidized [NADPH--hemoprotein reductase] + H2O + H(+). It catalyses the reaction estrone + reduced [NADPH--hemoprotein reductase] + O2 = 6alpha-hydroxyestrone + oxidized [NADPH--hemoprotein reductase] + H2O + H(+). The enzyme catalyses estrone + reduced [NADPH--hemoprotein reductase] + O2 = 15alpha-hydroxyestrone + oxidized [NADPH--hemoprotein reductase] + H2O + H(+). The catalysed reaction is estrone + reduced [NADPH--hemoprotein reductase] + O2 = 16alpha-hydroxyestrone + oxidized [NADPH--hemoprotein reductase] + H2O + H(+). It carries out the reaction 17beta-estradiol + reduced [NADPH--hemoprotein reductase] + O2 = 2-hydroxy-17beta-estradiol + oxidized [NADPH--hemoprotein reductase] + H2O + H(+). It catalyses the reaction 17beta-estradiol + reduced [NADPH--hemoprotein reductase] + O2 = 4-hydroxy-17beta-estradiol + oxidized [NADPH--hemoprotein reductase] + H2O + H(+). The enzyme catalyses 17beta-estradiol + reduced [NADPH--hemoprotein reductase] + O2 = 6alpha-hydroxy-17beta-estradiol + oxidized [NADPH--hemoprotein reductase] + H2O + H(+). The catalysed reaction is 17beta-estradiol + reduced [NADPH--hemoprotein reductase] + O2 = 7alpha-hydroxy-17beta-estradiol + oxidized [NADPH--hemoprotein reductase] + H2O + H(+). It carries out the reaction 17beta-estradiol + reduced [NADPH--hemoprotein reductase] + O2 = 15alpha-hydroxy-17beta-estradiol + oxidized [NADPH--hemoprotein reductase] + H2O + H(+). It catalyses the reaction (5Z,8Z,11Z)-eicosatrienoate + reduced [NADPH--hemoprotein reductase] + O2 = 19-hydroxy-(5Z,8Z,11Z)-eicosatrienoate + oxidized [NADPH--hemoprotein reductase] + H2O + H(+). The enzyme catalyses (5Z,8Z,11Z,14Z)-eicosatetraenoate + reduced [NADPH--hemoprotein reductase] + O2 = 16-hydroxy-(5Z,8Z,11Z,14Z)-eicosatetraenoate + oxidized [NADPH--hemoprotein reductase] + H2O + H(+). The catalysed reaction is (5Z,8Z,11Z,14Z)-eicosatetraenoate + reduced [NADPH--hemoprotein reductase] + O2 = 17-hydroxy-(5Z,8Z,11Z,14Z)-eicosatetraenoate + oxidized [NADPH--hemoprotein reductase] + H2O + H(+). It carries out the reaction (5Z,8Z,11Z,14Z)-eicosatetraenoate + reduced [NADPH--hemoprotein reductase] + O2 = 18-hydroxy-(5Z,8Z,11Z,14Z)-eicosatetraenoate + oxidized [NADPH--hemoprotein reductase] + H2O + H(+). It catalyses the reaction (5Z,8Z,11Z,14Z)-eicosatetraenoate + reduced [NADPH--hemoprotein reductase] + O2 = 19-hydroxy-(5Z,8Z,11Z,14Z)-eicosatetraenoate + oxidized [NADPH--hemoprotein reductase] + H2O + H(+). The enzyme catalyses (5Z,8Z,11Z,14Z,17Z)-eicosapentaenoate + reduced [NADPH--hemoprotein reductase] + O2 = 19-hydroxy-(5Z,8Z,11Z,14Z,17Z)-eicosapentaenoate + oxidized [NADPH--hemoprotein reductase] + H2O + H(+). The catalysed reaction is (5Z,8Z,11Z,14Z)-eicosatetraenoate + reduced [NADPH--hemoprotein reductase] + O2 = (8R,9S)-epoxy-(5Z,11Z,14Z)-eicosatrienoate + oxidized [NADPH--hemoprotein reductase] + H2O + H(+). It carries out the reaction (5Z,8Z,11Z,14Z)-eicosatetraenoate + reduced [NADPH--hemoprotein reductase] + O2 = (11R,12S)-epoxy-(5Z,8Z,14Z)-eicosatrienoate + oxidized [NADPH--hemoprotein reductase] + H2O + H(+). It catalyses the reaction (5Z,8Z,11Z,14Z)-eicosatetraenoate + reduced [NADPH--hemoprotein reductase] + O2 = (14S,15R)-epoxy-(5Z,8Z,11Z)-eicosatrienoate + oxidized [NADPH--hemoprotein reductase] + H2O + H(+). The enzyme catalyses (5Z,8Z,11Z,14Z)-eicosatetraenoate + reduced [NADPH--hemoprotein reductase] + O2 = (14R,15S)-epoxy-(5Z,8Z,11Z)-eicosatrienoate + oxidized [NADPH--hemoprotein reductase] + H2O + H(+). The catalysed reaction is (5Z,8Z,11Z,14Z,17Z)-eicosapentaenoate + reduced [NADPH--hemoprotein reductase] + O2 = (17R,18S)-epoxy-(5Z,8Z,11Z,14Z)-eicosatetraenoate + oxidized [NADPH--hemoprotein reductase] + H2O + H(+). It carries out the reaction (4Z,7Z,10Z,13Z,16Z,19Z)-docosahexaenoate + reduced [NADPH--hemoprotein reductase] + O2 = (19S,20R)-epoxy-(4Z,7Z,10Z,13Z,16Z)-docosapentaenoate + oxidized [NADPH--hemoprotein reductase] + H2O + H(+). It catalyses the reaction (4Z,7Z,10Z,13Z,16Z,19Z)-docosahexaenoate + reduced [NADPH--hemoprotein reductase] + O2 = (19R,20S)-epoxy-(4Z,7Z,10Z,13Z,16Z)-docosapentaenoate + oxidized [NADPH--hemoprotein reductase] + H2O + H(+). The enzyme catalyses all-trans-retinol + reduced [NADPH--hemoprotein reductase] + O2 = all-trans-retinal + oxidized [NADPH--hemoprotein reductase] + 2 H2O + H(+). The catalysed reaction is all-trans-retinal + reduced [NADPH--hemoprotein reductase] + O2 = all-trans-retinoate + oxidized [NADPH--hemoprotein reductase] + H2O + 2 H(+). It carries out the reaction (13S)-hydroperoxy-(9Z,11E)-octadecadienoate = 13-oxo-(9Z,11E)-octadecadienoate + H2O. It catalyses the reaction (12S)-hydroperoxy-(5Z,8Z,10E,14Z)-eicosatetraenoate = 12-oxo-(5Z,8Z,10E,14Z)-eicosatetraenoate + H2O. The enzyme catalyses (15S)-hydroperoxy-(5Z,8Z,11Z,13E)-eicosatetraenoate = 15-oxo-(5Z,8Z,11Z,13E)-eicosatetraenoate + H2O. The catalysed reaction is (5S)-hydroperoxy-(6E,8Z,11Z,14Z)-eicosatetraenoate = 5-oxo-(6E,8Z,11Z,14Z)-eicosatetraenoate + H2O. Its pathway is steroid hormone biosynthesis. It functions in the pathway lipid metabolism; fatty acid metabolism. It participates in cofactor metabolism; retinol metabolism. A cytochrome P450 monooxygenase involved in the metabolism of various endogenous substrates, including fatty acids, steroid hormones and vitamins. Mechanistically, uses molecular oxygen inserting one oxygen atom into a substrate, and reducing the second into a water molecule, with two electrons provided by NADPH via cytochrome P450 reductase (CPR; NADPH-ferrihemoprotein reductase). Catalyzes the hydroxylation of carbon-hydrogen bonds. Exhibits high catalytic activity for the formation of hydroxyestrogens from estrone (E1) and 17beta-estradiol (E2), namely 2-hydroxy E1 and E2, as well as D-ring hydroxylated E1 and E2 at the C15alpha and C16alpha positions. Displays different regioselectivities for polyunsaturated fatty acids (PUFA) hydroxylation. Catalyzes the epoxidation of double bonds of certain PUFA. Converts arachidonic acid toward epoxyeicosatrienoic acid (EET) regioisomers, 8,9-, 11,12-, and 14,15-EET, that function as lipid mediators in the vascular system. Displays an absolute stereoselectivity in the epoxidation of eicosapentaenoic acid (EPA) producing the 17(R),18(S) enantiomer. May play an important role in all-trans retinoic acid biosynthesis in extrahepatic tissues. Catalyzes two successive oxidative transformation of all-trans retinol to all-trans retinal and then to the active form all-trans retinoic acid. May also participate in eicosanoids metabolism by converting hydroperoxide species into oxo metabolites (lipoxygenase-like reaction, NADPH-independent). The sequence is that of Cytochrome P450 1A1 (CYP1A1) from Macaca mulatta (Rhesus macaque).